Here is a 98-residue protein sequence, read N- to C-terminus: MNKHFLFLFLLYCLIVAVTSLQCITCHLRTRTDRCRRGFGVCTAQKGEACMLLRIYQRNTLQISYMVCQKFCRDMTFDLRNRTYVHTCCNYNYCNFKL.

The first 20 residues, M1 to S20, serve as a signal peptide directing secretion. One can recognise a UPAR/Ly6 domain in the interval L21 to K97. Intrachain disulfides connect C23–C50, C26–C35, C42–C68, and C72–C88.

The protein belongs to the PATE family. As to expression, specifically expressed in prostate and testis.

The protein localises to the secreted. This Homo sapiens (Human) protein is Prostate and testis expressed protein 3 (PATE3).